The following is a 353-amino-acid chain: Beta-agarase B (353 aa).

The signal sequence occupies residues 1 to 17; it reads MYLIYLRLVFCCALLLG. Residue Cys18 is the site of N-palmitoyl cysteine attachment. A lipid anchor (S-diacylglycerol cysteine) is attached at Cys18. Residues 30 to 58 are disordered; sequence LPVEQEQEQETEQEGEPEESSEQDLVEEV. The segment covering 32-58 has biased composition (acidic residues); it reads VEQEQEQETEQEGEPEESSEQDLVEEV. The GH16 domain maps to 58 to 353; sequence VDWKDIPVPA…WIRIYKPVEK (296 aa). Residues 105–107 and Asp181 contribute to the substrate site; that span reads YHN. The Nucleophile role is filled by Glu184. Glu189 functions as the Proton donor in the catalytic mechanism. Substrate is bound by residues His215, Arg219, Asp224, Gln226, and Glu308.

This sequence belongs to the glycosyl hydrolase 16 family. Homodimer.

The protein localises to the cell outer membrane. The catalysed reaction is Hydrolysis of (1-&gt;4)-beta-D-galactosidic linkages in agarose, giving the tetramer as the predominant product.. Its function is as follows. Cleaves the beta-1,4-linkages between beta-D-galactose and alpha-L-3,6-anhydro-galactose residues in agarose. Cleaves agarose in a random manner with retention of the anomeric-bond configuration, producing beta-anomers that give rise progressively to alpha-anomers when mutarotation takes place. Also tolerant to hybrid substrates containing C6-sulfate groups at the -4, +1, and +3 positions. The sequence is that of Beta-agarase B (agaB) from Zobellia galactanivorans (strain DSM 12802 / CCUG 47099 / CIP 106680 / NCIMB 13871 / Dsij).